The following is a 96-amino-acid chain: MRPFLVFVLIVSVSLAFSFEDMPNKGGDSVASITADQARGHKRNPLFPFAQRSLTELKAGGCPLYCSSQIFCCHGRKCRNVDGRLKCVTEASMLGK.

Positions 1-16 (MRPFLVFVLIVSVSLA) are cleaved as a signal peptide. Positions 17-52 (FSFEDMPNKGGDSVASITADQARGHKRNPLFPFAQR) are excised as a propeptide.

Contains 3 disulfide bonds. Expressed by the venom duct.

It localises to the secreted. Its function is as follows. The recombinant protein causes paralysis to polychaete worms (Nereis virens), the natural prey of terebrid snails. This chain is Teretoxin Tgu6.1, found in Terebra guttata (White spotted auger snail).